Reading from the N-terminus, the 430-residue chain is Enolase (430 aa).

Gln167 contacts (2R)-2-phosphoglycerate. The Proton donor role is filled by Glu209. Positions 246, 287, and 314 each coordinate Mg(2+). 4 residues coordinate (2R)-2-phosphoglycerate: Lys339, Arg368, Ser369, and Lys390. The active-site Proton acceptor is the Lys339.

The protein belongs to the enolase family. The cofactor is Mg(2+).

It localises to the cytoplasm. The protein resides in the secreted. Its subcellular location is the cell surface. It catalyses the reaction (2R)-2-phosphoglycerate = phosphoenolpyruvate + H2O. It functions in the pathway carbohydrate degradation; glycolysis; pyruvate from D-glyceraldehyde 3-phosphate: step 4/5. Catalyzes the reversible conversion of 2-phosphoglycerate (2-PG) into phosphoenolpyruvate (PEP). It is essential for the degradation of carbohydrates via glycolysis. The protein is Enolase of Prochlorococcus marinus (strain MIT 9515).